Consider the following 351-residue polypeptide: Anthranilate phosphoribosyltransferase (351 aa).

Residues glycine 80, 83–84 (GD), threonine 88, 90–93 (NIST), 108–116 (KHGNRSITS), and serine 120 each bind 5-phospho-alpha-D-ribose 1-diphosphate. Glycine 80 lines the anthranilate pocket. Residue serine 92 coordinates Mg(2+). Asparagine 111 is an anthranilate binding site. Anthranilate is bound at residue arginine 166. Mg(2+) contacts are provided by aspartate 229 and glutamate 230.

It belongs to the anthranilate phosphoribosyltransferase family. As to quaternary structure, homodimer. Mg(2+) is required as a cofactor.

It carries out the reaction N-(5-phospho-beta-D-ribosyl)anthranilate + diphosphate = 5-phospho-alpha-D-ribose 1-diphosphate + anthranilate. It participates in amino-acid biosynthesis; L-tryptophan biosynthesis; L-tryptophan from chorismate: step 2/5. Functionally, catalyzes the transfer of the phosphoribosyl group of 5-phosphorylribose-1-pyrophosphate (PRPP) to anthranilate to yield N-(5'-phosphoribosyl)-anthranilate (PRA). In Chlorobaculum tepidum (strain ATCC 49652 / DSM 12025 / NBRC 103806 / TLS) (Chlorobium tepidum), this protein is Anthranilate phosphoribosyltransferase.